Reading from the N-terminus, the 841-residue chain is Outer membrane usher protein MyfC (841 aa).

Positions 1 to 26 are cleaved as a signal peptide; it reads MFFSLKNSVAKLIAFWAICLVLPVWA. Cys-817 and Cys-840 are disulfide-bonded.

It belongs to the fimbrial export usher family.

It is found in the cell outer membrane. In terms of biological role, involved in the export and assembly of the MyfA fimbrial subunit. The polypeptide is Outer membrane usher protein MyfC (myfC) (Yersinia enterocolitica).